A 236-amino-acid polypeptide reads, in one-letter code: Small ribosomal subunit protein uS3 (236 aa).

The 69-residue stretch at 39–107 (IRLYVLEELK…ETSLNIVEIH (69 aa)) folds into the KH type-2 domain. Residues 216–236 (ERRAAEVDHSGSSSNRRRENA) are disordered.

The protein belongs to the universal ribosomal protein uS3 family. In terms of assembly, part of the 30S ribosomal subunit. Forms a tight complex with proteins S10 and S14.

Its function is as follows. Binds the lower part of the 30S subunit head. Binds mRNA in the 70S ribosome, positioning it for translation. The protein is Small ribosomal subunit protein uS3 of Bartonella henselae (strain ATCC 49882 / DSM 28221 / CCUG 30454 / Houston 1) (Rochalimaea henselae).